We begin with the raw amino-acid sequence, 290 residues long: ATP synthase gamma chain (290 aa).

It belongs to the ATPase gamma chain family. F-type ATPases have 2 components, CF(1) - the catalytic core - and CF(0) - the membrane proton channel. CF(1) has five subunits: alpha(3), beta(3), gamma(1), delta(1), epsilon(1). CF(0) has three main subunits: a, b and c.

Its subcellular location is the cell inner membrane. Its function is as follows. Produces ATP from ADP in the presence of a proton gradient across the membrane. The gamma chain is believed to be important in regulating ATPase activity and the flow of protons through the CF(0) complex. The protein is ATP synthase gamma chain of Phenylobacterium zucineum (strain HLK1).